We begin with the raw amino-acid sequence, 507 residues long: Dihydrolipoyl dehydrogenase 2, mitochondrial (507 aa).

Residues Met1–Phe36 constitute a mitochondrion transit peptide. FAD is bound by residues Glu73–Cys82, Lys91, Gly155, and Thr184–Ser186. The cysteines at positions 82 and 87 are disulfide-linked. Residues Gly221–Glu228, Glu244, Val278, and Gly313 each bind NAD(+). FAD contacts are provided by residues Asp354 and Met360–His363. His486 acts as the Proton acceptor in catalysis.

Belongs to the class-I pyridine nucleotide-disulfide oxidoreductase family. Homodimer. Part of both the glycine cleavage system composed of four proteins: P, T, L and H and of the pyruvate dehydrogenase complex containing multiple copies of three enzymatic components: pyruvate dehydrogenase (E1), dihydrolipoamide acetyltransferase (E2) and lipoamide dehydrogenase (E3). It depends on FAD as a cofactor. Post-translationally, S-nytrosylated at unknown positions. Preferentially expressed in roots, flowers and siliques and at a lower level in stems and leaves.

The protein localises to the mitochondrion matrix. It carries out the reaction N(6)-[(R)-dihydrolipoyl]-L-lysyl-[protein] + NAD(+) = N(6)-[(R)-lipoyl]-L-lysyl-[protein] + NADH + H(+). Functionally, lipoamide dehydrogenase is a component of the glycine decarboxylase (GDC) or glycine cleavage system as well as of the alpha-ketoacid dehydrogenase complexes. LPD1 is probably the protein most often associated with the glycine decarboxylase complex while LPD2 is probably incorporated into alpha-ketoacid dehydrogenase complexes. This chain is Dihydrolipoyl dehydrogenase 2, mitochondrial (LPD2), found in Arabidopsis thaliana (Mouse-ear cress).